The sequence spans 330 residues: Diacylglycerol acyltransferase/mycolyltransferase Ag85B (330 aa).

The first 40 residues, 1–40 (MTDLSKKVRAWGRRLLVGTAAAVTLPGLIGLAGGAPTAGA), serve as a signal peptide directing secretion. Position 82-83 (82-83 (LR)) interacts with substrate. The tract at residues 98-108 (FEWYYQSGLSI) is fibronectin-binding. An intrachain disulfide couples Cys-127 to Cys-132. Ser-166 and Asp-194 together coordinate substrate. Residue Ser-166 is the Nucleophile of the active site. Glu-270 is an active-site residue. Residues 272–275 (FVRS), Lys-279, and 302–304 (HSW) contribute to the substrate site. Residue His-302 is part of the active site.

It belongs to the mycobacterial A85 antigen family.

It localises to the secreted. It catalyses the reaction 2 alpha,alpha'-trehalose 6-mycolate = alpha,alpha'-trehalose 6,6'-bismycolate + alpha,alpha-trehalose. It carries out the reaction an acyl-CoA + a 1,2-diacyl-sn-glycerol = a triacyl-sn-glycerol + CoA. Its function is as follows. The antigen 85 proteins (FbpA, FbpB, FbpC) are responsible for the high affinity of mycobacteria for fibronectin, a large adhesive glycoprotein, which facilitates the attachment of M.tuberculosis to murine alveolar macrophages (AMs). They also help to maintain the integrity of the cell wall by catalyzing the transfer of mycolic acids to cell wall arabinogalactan and through the synthesis of alpha,alpha-trehalose dimycolate (TDM, cord factor). They catalyze the transfer of a mycoloyl residue from one molecule of alpha,alpha-trehalose monomycolate (TMM) to another TMM, leading to the formation of TDM. This chain is Diacylglycerol acyltransferase/mycolyltransferase Ag85B (fbpB), found in Mycobacterium scrofulaceum.